The chain runs to 367 residues: Glutamate 5-kinase (367 aa).

Residue Lys-10 coordinates ATP. Positions 50, 137, and 149 each coordinate substrate. ATP contacts are provided by residues 169-170 (TD) and 211-217 (TGGMGTK). Residues 275 to 353 (AGEITVDEGA…QQIDAILGYE (79 aa)) form the PUA domain.

Belongs to the glutamate 5-kinase family.

It localises to the cytoplasm. It catalyses the reaction L-glutamate + ATP = L-glutamyl 5-phosphate + ADP. The protein operates within amino-acid biosynthesis; L-proline biosynthesis; L-glutamate 5-semialdehyde from L-glutamate: step 1/2. In terms of biological role, catalyzes the transfer of a phosphate group to glutamate to form L-glutamate 5-phosphate. The sequence is that of Glutamate 5-kinase from Cronobacter sakazakii (strain ATCC BAA-894) (Enterobacter sakazakii).